Reading from the N-terminus, the 235-residue chain is Phosphoribosylaminoimidazole-succinocarboxamide synthase (235 aa).

This sequence belongs to the SAICAR synthetase family.

It catalyses the reaction 5-amino-1-(5-phospho-D-ribosyl)imidazole-4-carboxylate + L-aspartate + ATP = (2S)-2-[5-amino-1-(5-phospho-beta-D-ribosyl)imidazole-4-carboxamido]succinate + ADP + phosphate + 2 H(+). It functions in the pathway purine metabolism; IMP biosynthesis via de novo pathway; 5-amino-1-(5-phospho-D-ribosyl)imidazole-4-carboxamide from 5-amino-1-(5-phospho-D-ribosyl)imidazole-4-carboxylate: step 1/2. The polypeptide is Phosphoribosylaminoimidazole-succinocarboxamide synthase (Streptococcus thermophilus (strain CNRZ 1066)).